Consider the following 188-residue polypeptide: MKELLYYTFIETEVTGAFLVFREKTQNLVFASLGNDKLFLLGKVEGFLKKHEKQDTMYDLQELKEAETYKKSIENYTICLENKMPLPSGAIPFEFLFGTDFQRKVWNELLNVEHGHVATYGDIAKRIGKPTAARSVGRACGSNNLALLVPCHRIVGSNRKLTGYKWSCKLKEQLLNNEKENSLSLSRL.

DNA-binding residues include tyrosine 120, glycine 121, and arginine 134. The active-site Nucleophile; methyl group acceptor is the cysteine 151. Position 157 (serine 157) interacts with DNA.

This sequence belongs to the MGMT family.

It localises to the nucleus. The catalysed reaction is a 6-O-methyl-2'-deoxyguanosine in DNA + L-cysteinyl-[protein] = S-methyl-L-cysteinyl-[protein] + a 2'-deoxyguanosine in DNA. The enzyme catalyses a 4-O-methyl-thymidine in DNA + L-cysteinyl-[protein] = a thymidine in DNA + S-methyl-L-cysteinyl-[protein]. Involved in the cellular defense against the biological effects of O6-methylguanine (O6-MeG) and O4-methylthymine (O4-MeT) in DNA. Repairs the methylated nucleobase in DNA by stoichiometrically transferring the methyl group to a cysteine residue in the enzyme. This is a suicide reaction: the enzyme is irreversibly inactivated. Prefers double-stranded DNA over single-stranded DNA as substrate. This chain is Methylated-DNA--protein-cysteine methyltransferase (MGT1), found in Saccharomyces cerevisiae (strain YJM789) (Baker's yeast).